The sequence spans 264 residues: S-adenosylmethionine decarboxylase proenzyme (264 aa).

Residue Ser112 is the Schiff-base intermediate with substrate; via pyruvic acid of the active site. Pyruvic acid (Ser); by autocatalysis is present on Ser112. Catalysis depends on His117, which acts as the Proton acceptor; for processing activity. The active-site Proton donor; for catalytic activity is Cys140.

Belongs to the prokaryotic AdoMetDC family. Type 2 subfamily. As to quaternary structure, heterooctamer of four alpha and four beta chains arranged as a tetramer of alpha/beta heterodimers. Pyruvate is required as a cofactor. In terms of processing, is synthesized initially as an inactive proenzyme. Formation of the active enzyme involves a self-maturation process in which the active site pyruvoyl group is generated from an internal serine residue via an autocatalytic post-translational modification. Two non-identical subunits are generated from the proenzyme in this reaction, and the pyruvate is formed at the N-terminus of the alpha chain, which is derived from the carboxyl end of the proenzyme. The post-translation cleavage follows an unusual pathway, termed non-hydrolytic serinolysis, in which the side chain hydroxyl group of the serine supplies its oxygen atom to form the C-terminus of the beta chain, while the remainder of the serine residue undergoes an oxidative deamination to produce ammonia and the pyruvoyl group blocking the N-terminus of the alpha chain.

It catalyses the reaction S-adenosyl-L-methionine + H(+) = S-adenosyl 3-(methylsulfanyl)propylamine + CO2. It functions in the pathway amine and polyamine biosynthesis; S-adenosylmethioninamine biosynthesis; S-adenosylmethioninamine from S-adenosyl-L-methionine: step 1/1. Its function is as follows. Catalyzes the decarboxylation of S-adenosylmethionine to S-adenosylmethioninamine (dcAdoMet), the propylamine donor required for the synthesis of the polyamines spermine and spermidine from the diamine putrescine. The chain is S-adenosylmethionine decarboxylase proenzyme from Cronobacter sakazakii (strain ATCC BAA-894) (Enterobacter sakazakii).